We begin with the raw amino-acid sequence, 527 residues long: Type 2 DNA topoisomerase 6 subunit B (527 aa).

ATP is bound by residues Asn39, Asp73, 94–95, 103–110, and Lys421; these read SK and GVFGLGLK.

The protein belongs to the TOP6B family. As to quaternary structure, homodimer. Heterotetramer of two Top6A and two Top6B chains.

It carries out the reaction ATP-dependent breakage, passage and rejoining of double-stranded DNA.. In terms of biological role, relaxes both positive and negative superturns and exhibits a strong decatenase activity. The sequence is that of Type 2 DNA topoisomerase 6 subunit B from Pyrobaculum aerophilum (strain ATCC 51768 / DSM 7523 / JCM 9630 / CIP 104966 / NBRC 100827 / IM2).